Reading from the N-terminus, the 218-residue chain is Small ribosomal subunit protein uS3c (218 aa).

Residues 39 to 120 (IRNFMNKELL…IITCKVVGVT (82 aa)) enclose the KH type-2 domain.

This sequence belongs to the universal ribosomal protein uS3 family. As to quaternary structure, part of the 30S ribosomal subunit.

The protein localises to the plastid. The protein resides in the chloroplast. The chain is Small ribosomal subunit protein uS3c (rps3) from Euglena gracilis.